Reading from the N-terminus, the 65-residue chain is Photosystem II reaction center protein J (65 aa).

The helical transmembrane segment at 35–55 (LWLVATAGGIAVIFVLGIFFY) threads the bilayer.

Belongs to the PsbJ family. PSII is composed of 1 copy each of membrane proteins PsbA, PsbB, PsbC, PsbD, PsbE, PsbF, PsbH, PsbI, PsbJ, PsbK, PsbL, PsbM, PsbT, PsbX, PsbY, Psb30/Ycf12, peripheral proteins PsbO, CyanoQ (PsbQ), PsbU, PsbV and a large number of cofactors. It forms dimeric complexes.

Its subcellular location is the cellular thylakoid membrane. In terms of biological role, one of the components of the core complex of photosystem II (PSII). PSII is a light-driven water:plastoquinone oxidoreductase that uses light energy to abstract electrons from H(2)O, generating O(2) and a proton gradient subsequently used for ATP formation. It consists of a core antenna complex that captures photons, and an electron transfer chain that converts photonic excitation into a charge separation. The polypeptide is Photosystem II reaction center protein J (Prochlorococcus marinus (strain MIT 9312)).